The sequence spans 1080 residues: DNA-directed RNA polymerase subunit beta C-terminal section (1080 aa).

This sequence belongs to the RNA polymerase beta chain family. In terms of assembly, in plastids the minimal PEP RNA polymerase catalytic core is composed of four subunits: alpha, beta, beta', and beta''. When a (nuclear-encoded) sigma factor is associated with the core the holoenzyme is formed, which can initiate transcription.

It localises to the plastid. The protein localises to the chloroplast. It catalyses the reaction RNA(n) + a ribonucleoside 5'-triphosphate = RNA(n+1) + diphosphate. DNA-dependent RNA polymerase catalyzes the transcription of DNA into RNA using the four ribonucleoside triphosphates as substrates. The polypeptide is DNA-directed RNA polymerase subunit beta C-terminal section (rpoB2) (Stigeoclonium helveticum (Green alga)).